A 281-amino-acid chain; its full sequence is Ribosomal RNA small subunit methyltransferase A (281 aa).

S-adenosyl-L-methionine contacts are provided by N21, L23, G48, E69, D92, and N113.

This sequence belongs to the class I-like SAM-binding methyltransferase superfamily. rRNA adenine N(6)-methyltransferase family. RsmA subfamily.

Its subcellular location is the cytoplasm. The catalysed reaction is adenosine(1518)/adenosine(1519) in 16S rRNA + 4 S-adenosyl-L-methionine = N(6)-dimethyladenosine(1518)/N(6)-dimethyladenosine(1519) in 16S rRNA + 4 S-adenosyl-L-homocysteine + 4 H(+). Specifically dimethylates two adjacent adenosines (A1518 and A1519) in the loop of a conserved hairpin near the 3'-end of 16S rRNA in the 30S particle. May play a critical role in biogenesis of 30S subunits. The protein is Ribosomal RNA small subunit methyltransferase A of Ralstonia nicotianae (strain ATCC BAA-1114 / GMI1000) (Ralstonia solanacearum).